The following is a 429-amino-acid chain: D-amino acid dehydrogenase (429 aa).

3–17 (VLILGSGVIGVTSAW) contacts FAD.

Belongs to the DadA oxidoreductase family. FAD serves as cofactor.

It catalyses the reaction a D-alpha-amino acid + A + H2O = a 2-oxocarboxylate + AH2 + NH4(+). It participates in amino-acid degradation; D-alanine degradation; NH(3) and pyruvate from D-alanine: step 1/1. Functionally, oxidative deamination of D-amino acids. This Xanthomonas euvesicatoria pv. vesicatoria (strain 85-10) (Xanthomonas campestris pv. vesicatoria) protein is D-amino acid dehydrogenase.